Reading from the N-terminus, the 198-residue chain is Large ribosomal subunit protein bL25 (198 aa).

The protein belongs to the bacterial ribosomal protein bL25 family. CTC subfamily. As to quaternary structure, part of the 50S ribosomal subunit; part of the 5S rRNA/L5/L18/L25 subcomplex. Contacts the 5S rRNA. Binds to the 5S rRNA independently of L5 and L18.

Functionally, this is one of the proteins that binds to the 5S RNA in the ribosome where it forms part of the central protuberance. This chain is Large ribosomal subunit protein bL25, found in Lysinibacillus sphaericus (strain C3-41).